Reading from the N-terminus, the 671-residue chain is MSQIPSPNDPASTGAAPSSAAVPAGPSATPAPSPTAGFSLPGHRPPPTGKALAALAVGALGVVYGDIGTSPLYSLKECFGGPHGVHPTDANVLGVLSLVFWAMTFVVTFKYMSFVMRADNRGEGGILALMALVGKTETTRLGRRMLLMLGLFGAALLYGDGIITPAISVLGAVEGVAVAAPAMERAVVPATVVILVFLFLFQKQGTAKVGAVFGPVMLVWFATIAVLGVRGILHDPTILRALLPTHGLSFFARNGWHGFLVLGGVVLVITGGEALYADMGHFGKRPIRVAWLGLAMPALLLNYLGQGALLLHDPGAARNPFYLLAPEWALYPTIAIATAAAIVASQALISGAYSLTQQAIQLGYSPRVTIRHTSQREIGQIYLPEVNWMLGTACLALVLGFQTSSRLASAYGIAVTGTMIVTTLLFHRVMRDRWGWARWKAWPLTSLFLTVDASFFLANVVKFRDGGWFPIAAAALVFTLMSTWKRGRDALALMLKDAGLPLDLFMADVARRKVQRVAGTAVFMTSNPGGVPPVLLHHLKHNKVLHERVVLVSILAHEIPFVNEPERVNARELGSGFFQVIAHYGFMETPDVPALLDSLPRRELAGPRITIVPMETTYFLGRETLLANGPSNIPTWRKRLFIVMARNAQTASAFFGLPPNRVVEMGAQIQL.

The interval 1 to 43 is disordered; that stretch reads MSQIPSPNDPASTGAAPSSAAVPAGPSATPAPSPTAGFSLPGH. Low complexity predominate over residues 10 to 37; it reads PASTGAAPSSAAVPAGPSATPAPSPTAG. Helical transmembrane passes span 52–72, 92–112, 147–167, 181–201, 209–229, 255–275, 291–311, 323–343, 381–401, 407–427, 441–461, and 465–485; these read LAALAVGALGVVYGDIGTSPL, VLGVLSLVFWAMTFVVTFKYM, LMLGLFGAALLYGDGIITPAI, PAMERAVVPATVVILVFLFLF, VGAVFGPVMLVWFATIAVLGV, GWHGFLVLGGVVLVITGGEAL, WLGLAMPALLLNYLGQGALLL, LLAPEWALYPTIAIATAAAIV, IYLPEVNWMLGTACLALVLGF, LASAYGIAVTGTMIVTTLLFH, AWPLTSLFLTVDASFFLANVV, and DGGWFPIAAAALVFTLMSTWK.

It belongs to the HAK/KUP transporter (TC 2.A.72) family.

The protein resides in the cell inner membrane. The catalysed reaction is K(+)(in) + H(+)(in) = K(+)(out) + H(+)(out). Its function is as follows. Transport of potassium into the cell. Likely operates as a K(+):H(+) symporter. The sequence is that of Probable potassium transport system protein Kup from Anaeromyxobacter sp. (strain K).